The primary structure comprises 312 residues: MAQPYPPAQYPPPPQNGIPAEYAPPPPHPTQDYSGQTPVPTEHGMTLYTPAQTHPEQPGSEASTQPIAGTQTVPQTDEAAQTDSQPLHPSDPTEKQQPKRLHVSNIPFRFRDPDLRQMFGQFGKILDVEIIFNERGSKGFGFVTFETSSDADRAREKLNGTIVEGRKIEVNNATARVMTNKKTGNPYTNGWKLNPVVGAVYGPEFYAVTGFPYPTTGTAVAYRGAHLRGRGRAVYNTFRAAPPPPPIPTYGAVVYQDGFYGAEIYGGYAAYRYAQPAAAAAAYSDSYGRVYAAADPYHHTIGPAATYSIGTM.

Residues 1–29 (MAQPYPPAQYPPPPQNGIPAEYAPPPPHP) are compositionally biased toward pro residues. A disordered region spans residues 1-104 (MAQPYPPAQY…KQQPKRLHVS (104 aa)). The segment covering 49–87 (TPAQTHPEQPGSEASTQPIAGTQTVPQTDEAAQTDSQPL) has biased composition (polar residues). The 76-residue stretch at 100–175 (RLHVSNIPFR…RKIEVNNATA (76 aa)) folds into the RRM domain. Position 223 is an asymmetric dimethylarginine; alternate (arginine 223). At arginine 223 the chain carries Omega-N-methylarginine; alternate. Arginine 272 carries the asymmetric dimethylarginine modification.

It localises to the nucleus. Its subcellular location is the cytoplasm. Functionally, pre-mRNA alternative splicing regulator. Regulates alternative splicing of RBFOX2 to enhance the production of mRNA species that are targeted for nonsense-mediated decay (NMD). This chain is RNA binding protein fox-1 homolog 3 (RBFOX3), found in Homo sapiens (Human).